The primary structure comprises 481 residues: GTPase Der (481 aa).

EngA-type G domains lie at 47–210 (PVLA…PDVS) and 221–394 (RRVA…ESWE). Residues 53–60 (GRPNVGKS), 100–104 (DTGGW), 162–165 (NKVD), 227–234 (GRPNVGKS), 274–278 (DTAGI), and 339–342 (NKWD) each bind GTP. The region spanning 395 to 477 (TRIPTGKFNA…PIVLNMRVRE (83 aa)) is the KH-like domain.

This sequence belongs to the TRAFAC class TrmE-Era-EngA-EngB-Septin-like GTPase superfamily. EngA (Der) GTPase family. As to quaternary structure, associates with the 50S ribosomal subunit.

Its function is as follows. GTPase that plays an essential role in the late steps of ribosome biogenesis. The chain is GTPase Der from Leifsonia xyli subsp. xyli (strain CTCB07).